Here is a 141-residue protein sequence, read N- to C-terminus: Hemoglobin subunit zeta (141 aa).

Serine 1 is subject to N-acetylserine. Residues serine 1–arginine 141 form the Globin domain. Threonine 28 is modified (phosphothreonine). A Phosphoserine modification is found at serine 52. Histidine 58 contacts heme b. A Phosphoserine modification is found at serine 72. Heme b is bound at residue histidine 87.

Belongs to the globin family. Heterotetramer of two zeta chains and two epsilon chains.

The zeta chain is an alpha-type chain of mammalian embryonic hemoglobin. The sequence is that of Hemoglobin subunit zeta from Sus scrofa (Pig).